The primary structure comprises 54 residues: UPF0391 membrane protein RC1_1636 (54 aa).

2 helical membrane-spanning segments follow: residues 3–23 (YWALIFFVVALVAGVLGFGGI) and 30–50 (IAQILFFIFLVIFVVSLIMGL).

This sequence belongs to the UPF0391 family.

It localises to the cell membrane. The chain is UPF0391 membrane protein RC1_1636 from Rhodospirillum centenum (strain ATCC 51521 / SW).